A 904-amino-acid chain; its full sequence is E3 ubiquitin-protein ligase ZNF598 (904 aa).

The RING-type zinc-finger motif lies at 29-69 (CVLCCGDLEATALGRCDHPVCYRCSTKMRVLCEQRYCAVCR). The C2H2-type zinc finger occupies 187–210 (PLCKFCDERYLDNDELLKHLRRDH). Residue Tyr-306 is modified to Phosphotyrosine. Disordered stretches follow at residues 312-469 (YSRQ…GLAL) and 490-656 (VSSV…LPRP). Low complexity predominate over residues 346 to 358 (AAAVRASVAAQQQ). Residues 359-388 (EEARRSEDQEEGGRPKKEEAAARGPEDPRG) show a composition bias toward basic and acidic residues. A compositionally biased stretch (polar residues) spans 404-416 (ETSTNGPVSQEAF). Over residues 418-431 (VTGPAAPGCVGVPG) the composition is skewed to low complexity. Residues Gly-428, Gly-431, and Ser-437 each carry the phosphoserine modification. Composition is skewed to low complexity over residues 447-461 (SLSA…TAAT) and 502-513 (SLVSAWNSSSSS). Residues 521-531 (LSAQATGSGQP) are compositionally biased toward polar residues. A compositionally biased stretch (basic residues) spans 534 to 543 (KAGKGSRGGR). Residues 564 to 584 (LLSTRPTGSVSSTLGLASIQP) are compositionally biased toward polar residues.

Belongs to the ZNF598/HEL2 family. Interacts with the E2 ubiquitin-conjugating enzyme UBE2D3. Component of the 4EHP-GYF2 complex, at least composed of EIF4E2, GIGYF2 and ZNF598.

The protein resides in the cytoplasm. It localises to the cytosol. It carries out the reaction S-ubiquitinyl-[E2 ubiquitin-conjugating enzyme]-L-cysteine + [acceptor protein]-L-lysine = [E2 ubiquitin-conjugating enzyme]-L-cysteine + N(6)-ubiquitinyl-[acceptor protein]-L-lysine.. It participates in protein modification; protein ubiquitination. In terms of biological role, E3 ubiquitin-protein ligase that plays a key role in the ribosome quality control (RQC), a pathway that takes place when a ribosome has stalled during translation, leading to degradation of nascent peptide chains. ZNF598 is activated when ribosomes are stalled within an mRNA following translation of prematurely polyadenylated mRNAs. Acts as a ribosome collision sensor: specifically recognizes and binds collided di-ribosome, which arises when a trailing ribosome encounters a slower leading ribosome, leading to terminally arrest translation. Following binding to colliding ribosomes, mediates monoubiquitination of 40S ribosomal proteins RPS10/eS10 and RPS3/uS3, and 'Lys-63'-linked polyubiquitination of RPS20/uS10. Polyubiquitination of RPS20/uS10 promotes recruitment of the RQT (ribosome quality control trigger) complex, which drives the disassembly of stalled ribosomes, followed by degradation of nascent peptides. E3 ubiquitin-protein ligase activity is dependent on the E2 ubiquitin-conjugating enzyme UBE2D3. Also acts as an adapter that recruits the 4EHP-GYF2 complex to mRNAs. Independently of its role in RQC, may also act as a negative regulator of interferon-stimulated gene (ISG) expression. Its function is as follows. (Microbial infection) Required for poxvirus protein synthesis by mediating ubiquitination of RPS10/eS10 and RPS20/uS10. Poxvirus encoding mRNAs contain unusual 5' poly(A) leaders and ZNF598 is required for their translational efficiency, possibly via its ability to suppress readthrough or sliding on shorter poly(A) tracts. This chain is E3 ubiquitin-protein ligase ZNF598, found in Homo sapiens (Human).